The chain runs to 251 residues: PF03932 family protein CutC (251 aa).

It belongs to the CutC family.

The protein localises to the cytoplasm. The polypeptide is PF03932 family protein CutC (Agrobacterium fabrum (strain C58 / ATCC 33970) (Agrobacterium tumefaciens (strain C58))).